Consider the following 2979-residue polypeptide: Polyketide synthase-nonribosomal peptide synthetase TwmB (2979 aa).

Residues 5–435 (GAEIAIIGSG…GTNAHAILES (431 aa)) form the Ketosynthase family 3 (KS3) domain. Catalysis depends on for beta-ketoacyl synthase activity residues C176, H315, and H355. Positions 549 to 864 (VFTGQGAQWA…PYTGLFTRGV (316 aa)) are malonyl-CoA:ACP transacylase (MAT) domain. Residue S643 is the For malonyltransferase activity of the active site. An N-terminal hotdog fold region spans residues 936-1070 (HDLLGHLTPN…GRVRIHLGEA (135 aa)). A dehydratase (DH) domain region spans residues 936–1234 (HDLLGHLTPN…ECVPFSRQTA (299 aa)). Positions 936-1235 (HDLLGHLTPN…CVPFSRQTAK (300 aa)) constitute a PKS/mFAS DH domain. The active-site Proton acceptor; for dehydratase activity is H968. The tract at residues 1085-1235 (LVSVSEKKFY…CVPFSRQTAK (151 aa)) is C-terminal hotdog fold. The active-site Proton donor; for dehydratase activity is the D1141. Residues 1387-1572 (NFTAHLAGIL…GIDTSTVEQP (186 aa)) form an inactive methyltransferase (MT) domain region. Residues 2098-2271 (TYWLVGLTGG…AASVMDIGAV (174 aa)) form a ketoreductase (KR)domain region. The 86-residue stretch at 2380–2465 (RNNEEAYGIV…ELVDTATEAI (86 aa)) folds into the Carrier domain. An O-(pantetheine 4'-phosphoryl)serine modification is found at S2425. Residues 2476-2497 (YPAEQTSSQNSDSGQDMASSFD) are disordered. Positions 2479–2497 (EQTSSQNSDSGQDMASSFD) are enriched in polar residues. The tract at residues 2534 to 2970 (KSIPVSFTQA…MTLGQAALAE (437 aa)) is condensation.

As to quaternary structure, interacts with TwmE. It depends on pantetheine 4'-phosphate as a cofactor.

It carries out the reaction 5-aminopentanoate + 7 malonyl-CoA + acetyl-CoA + 11 NADPH + 17 H(+) = wortmanamide A + 7 CO2 + 11 NADP(+) + 8 CoA + 6 H2O. It catalyses the reaction 5-aminopentanoate + 8 malonyl-CoA + acetyl-CoA + 13 NADPH + 20 H(+) = wortmanamide B + 8 CO2 + 13 NADP(+) + 9 CoA + 7 H2O. It participates in secondary metabolite biosynthesis. In terms of biological role, polyketide synthase-nonribosomal peptide synthetase; part of the gene cluster that mediates the biosynthesis of wortmanamides A and B, reduced long-chain polyketides amidated with a specific omega-amino acid, 5-aminopentanoic acid (5PA). The PKS modules of TwmB are involved in the synthesis of the polyketide backbone, whereas the non-canonical C domain of TwmB is a bonafide condensation domain that specifically selects 5PA and catalyzes amidation to release polyketide chain. The C domain clearly prefers C16 and C18 fatty acyl substrates, which is consistent with simultaneous formation of both octaketide and nonaketide acyl amides wortmanamides A and B. Because TwmB lacks a designated enoylreductase (ER) domain, the required activity is provided the enoyl reductase TwmE. The roles of the remaining enzymes have still to be clarified. The chain is Polyketide synthase-nonribosomal peptide synthetase TwmB from Talaromyces wortmannii (Penicillium wortmannii).